The sequence spans 340 residues: Glucokinase (340 aa).

17 to 22 contacts ATP; that stretch reads GDIGGT.

The protein belongs to the bacterial glucokinase family.

The protein resides in the cytoplasm. The catalysed reaction is D-glucose + ATP = D-glucose 6-phosphate + ADP + H(+). This Agrobacterium fabrum (strain C58 / ATCC 33970) (Agrobacterium tumefaciens (strain C58)) protein is Glucokinase.